The sequence spans 307 residues: Potassium channel subfamily K member 7 (307 aa).

The Cytoplasmic portion of the chain corresponds to 1–10 (MGGLRPWSRY). The helical transmembrane segment at 11–31 (GLLVVAHLLALGLGAVVFQAL) threads the bilayer. Asn83 carries N-linked (GlcNAc...) asparagine glycosylation. An intramembrane region (pore-forming) is located at residues 92-119 (LPSALLFAASILTTTGYGHMAPLSPGGK). The chain crosses the membrane as a helical span at residues 120-140 (AFCMVYAALGLPASLALVATL). The Cytoplasmic portion of the chain corresponds to 141 to 170 (RHCLLPVLSRPRAWVAVHWQLSPARAALLQ). The chain crosses the membrane as a helical span at residues 171–191 (AVALGLLVASSFVLLPALVLW). The segment at residues 199-227 (LLGAVYFCFSSLSTIGLEDLLPGRGRSLH) is an intramembrane region (pore-forming). A helical transmembrane segment spans residues 233–253 (LGQLALLGYLLLGLLAMLLAV). Topologically, residues 254–307 (ETFSELPQVRAMGKFFRPSGPVTAEDQGGILGQDELALSTLPPAAPASGQAPAC) are cytoplasmic.

It belongs to the two pore domain potassium channel (TC 1.A.1.8) family. As to quaternary structure, homodimer.

It is found in the membrane. In terms of biological role, probable potassium channel subunit. No channel activity observed in vitro as protein remains in the endoplasmic reticulum. May need to associate with an as yet unknown partner in order to reach the plasma membrane. In Homo sapiens (Human), this protein is Potassium channel subfamily K member 7 (KCNK7).